The sequence spans 347 residues: Transcription elongation factor A protein 3 (347 aa).

Residues 5–82 form the TFIIS N-terminal domain; it reads EELLRIAKKL…KNWKRLLDSP (78 aa). Residues 83–100 are compositionally biased toward basic and acidic residues; it reads RTTKGEREEREKAKKEKG. The interval 83-168 is disordered; it reads RTTKGEREER…TTPSSPSTPT (86 aa). A Phosphoserine modification is found at serine 113. Over residues 119–131 the composition is skewed to basic and acidic residues; that stretch reads GGGEPKTRRDSVD. 2 stretches are compositionally biased toward low complexity: residues 132 to 142 and 157 to 168; these read SRSSTTSSPKR and TPTTPSSPSTPT. A Phosphoserine modification is found at serine 139. The TFIIS central domain occupies 186–302; sequence VRDKCVEMLS…EHQMAKTGGT (117 aa). The TFIIS-type zinc finger occupies 305–345; the sequence is DLLRCSKCKKKNCTYNQVQTRSADEPMTTFVLCNECGNRWK. Residues cysteine 309, cysteine 312, cysteine 337, and cysteine 340 each coordinate Zn(2+).

The protein belongs to the TFS-II family. In terms of tissue distribution, liver, kidney and heart.

The protein localises to the nucleus. Functionally, necessary for efficient RNA polymerase II transcription elongation past template-encoded arresting sites. The arresting sites in DNA have the property of trapping a certain fraction of elongating RNA polymerases that pass through, resulting in locked ternary complexes. Cleavage of the nascent transcript by S-II allows the resumption of elongation from the new 3'-terminus. In Mus musculus (Mouse), this protein is Transcription elongation factor A protein 3 (Tcea3).